The following is a 73-amino-acid chain: Biotin/lipoyl attachment protein (73 aa).

A Biotinyl-binding domain is found at 2 to 69 (TVSIQMAGNL…NEGDVLLELS (68 aa)). Lys-35 bears the N6-biotinyllysine; alternate mark. Lys-35 bears the N6-lipoyllysine; alternate mark.

Can be both biotinylated and lipoylated on Lys-35 upon overexpression in E.coli depending on the growth medium; the nature of the modification in situ in B.subtilis is unknown.

In Bacillus subtilis (strain 168), this protein is Biotin/lipoyl attachment protein (yngHB).